A 429-amino-acid chain; its full sequence is Phosphoribosylamine--glycine ligase (429 aa).

In terms of domain architecture, ATP-grasp spans K109 to E316. L135 to S196 lines the ATP pocket. Positions S212–P237 are disordered. Residues Q213 to T223 show a composition bias toward basic and acidic residues. Mg(2+)-binding residues include E286 and N288.

It belongs to the GARS family. In terms of assembly, monomer. Mg(2+) is required as a cofactor. Requires Mn(2+) as cofactor.

It catalyses the reaction 5-phospho-beta-D-ribosylamine + glycine + ATP = N(1)-(5-phospho-beta-D-ribosyl)glycinamide + ADP + phosphate + H(+). It participates in purine metabolism; IMP biosynthesis via de novo pathway; N(1)-(5-phospho-D-ribosyl)glycinamide from 5-phospho-alpha-D-ribose 1-diphosphate: step 2/2. This chain is Phosphoribosylamine--glycine ligase, found in Escherichia coli O157:H7.